Here is an 88-residue protein sequence, read N- to C-terminus: MALKERLGTVVSDKMDKTVVVAVENRFPHPIYQKTVSRTTRYKAHDAGNTCRIGDRVRITETRPISRSKRWTVAEVLSHSPKAQEVST.

It belongs to the universal ribosomal protein uS17 family. In terms of assembly, part of the 30S ribosomal subunit.

In terms of biological role, one of the primary rRNA binding proteins, it binds specifically to the 5'-end of 16S ribosomal RNA. This chain is Small ribosomal subunit protein uS17, found in Prochlorococcus marinus (strain MIT 9303).